A 522-amino-acid chain; its full sequence is 2-isopropylmalate synthase (522 aa).

One can recognise a Pyruvate carboxyltransferase domain in the interval 5 to 267 (VIIFDTTLRD…ETGINAKEIH (263 aa)). Mn(2+) contacts are provided by Asp14, His202, His204, and Asn238. A regulatory domain region spans residues 392-522 (QLQQLVVQSD…MQKNRELGGV (131 aa)).

Belongs to the alpha-IPM synthase/homocitrate synthase family. LeuA type 1 subfamily. As to quaternary structure, homodimer. The cofactor is Mn(2+).

It localises to the cytoplasm. The enzyme catalyses 3-methyl-2-oxobutanoate + acetyl-CoA + H2O = (2S)-2-isopropylmalate + CoA + H(+). The protein operates within amino-acid biosynthesis; L-leucine biosynthesis; L-leucine from 3-methyl-2-oxobutanoate: step 1/4. Functionally, catalyzes the condensation of the acetyl group of acetyl-CoA with 3-methyl-2-oxobutanoate (2-ketoisovalerate) to form 3-carboxy-3-hydroxy-4-methylpentanoate (2-isopropylmalate). This chain is 2-isopropylmalate synthase, found in Shewanella baltica (strain OS155 / ATCC BAA-1091).